Reading from the N-terminus, the 254-residue chain is Aspartate/glutamate leucyltransferase (254 aa).

This sequence belongs to the R-transferase family. Bpt subfamily.

It is found in the cytoplasm. The enzyme catalyses N-terminal L-glutamyl-[protein] + L-leucyl-tRNA(Leu) = N-terminal L-leucyl-L-glutamyl-[protein] + tRNA(Leu) + H(+). It carries out the reaction N-terminal L-aspartyl-[protein] + L-leucyl-tRNA(Leu) = N-terminal L-leucyl-L-aspartyl-[protein] + tRNA(Leu) + H(+). Functionally, functions in the N-end rule pathway of protein degradation where it conjugates Leu from its aminoacyl-tRNA to the N-termini of proteins containing an N-terminal aspartate or glutamate. The chain is Aspartate/glutamate leucyltransferase from Xylella fastidiosa (strain M12).